The chain runs to 278 residues: Chitosanase (278 aa).

A signal peptide spans 1–41; that stretch reads MRLKHPTARLALAALLVAVPRSVAAAGTVHAAPAPAGATRL. The Proton donor role is filled by glutamate 63. Aspartate 81 acts as the Nucleophile in catalysis.

Belongs to the glycosyl hydrolase 46 family.

It is found in the secreted. It catalyses the reaction Endohydrolysis of beta-(1-&gt;4)-linkages between D-glucosamine residues in a partly acetylated chitosan.. Functionally, aids in the defense against invading fungal pathogens by degrading their cell wall chitosan. In Nocardioides sp. (strain N106), this protein is Chitosanase (csn).